A 46-amino-acid chain; its full sequence is Protein PsbN (46 aa).

Residues 5-27 form a helical membrane-spanning segment; that stretch reads TLVTLFVSGLLMSFTGYALYTAF.

The protein belongs to the PsbN family.

Its subcellular location is the plastid membrane. Its function is as follows. May play a role in photosystem I and II biogenesis. This Cuscuta obtusiflora (Peruvian dodder) protein is Protein PsbN.